The following is a 194-amino-acid chain: Large ribosomal subunit protein eL15 (194 aa).

Residues Ala-165–Lys-194 are disordered. Residues Lys-167–Gly-176 are compositionally biased toward basic residues. Positions Lys-177–Lys-194 are enriched in basic and acidic residues.

This sequence belongs to the eukaryotic ribosomal protein eL15 family. As to quaternary structure, part of the 50S ribosomal subunit.

The sequence is that of Large ribosomal subunit protein eL15 from Pyrococcus furiosus (strain ATCC 43587 / DSM 3638 / JCM 8422 / Vc1).